The following is a 243-amino-acid chain: UPF0758 protein SYNPCC7002_A0220 (243 aa).

In terms of domain architecture, MPN spans 112–235 (IIVDSPEAAA…FGSLRQKTAL (124 aa)). Zn(2+) is bound by residues histidine 184, histidine 186, and aspartate 197. A JAMM motif motif is present at residues 184 to 197 (HNHPSGNVDPSPED).

This sequence belongs to the UPF0758 family.

This chain is UPF0758 protein SYNPCC7002_A0220, found in Picosynechococcus sp. (strain ATCC 27264 / PCC 7002 / PR-6) (Agmenellum quadruplicatum).